The primary structure comprises 111 residues: MGKLTLLLLILLGWLQYSLWLGKNGIHDYVRVKDDVVVQQGNNAKLKDRNEQLFAEIDDLNGGQEAIEERARNELGMIKPGESFYRLVPESNHRNANTPSSTNTSSNNTQR.

Topologically, residues 1 to 3 are cytoplasmic; sequence MGK. Residues 4 to 21 form a helical membrane-spanning segment; that stretch reads LTLLLLILLGWLQYSLWL. The Periplasmic segment spans residues 22-111; that stretch reads GKNGIHDYVR…TNTSSNNTQR (90 aa). Residues 33-63 adopt a coiled-coil conformation; it reads KDDVVVQQGNNAKLKDRNEQLFAEIDDLNGG. Positions 88–111 are disordered; that stretch reads VPESNHRNANTPSSTNTSSNNTQR. Residues 97–111 show a composition bias toward low complexity; it reads NTPSSTNTSSNNTQR.

Belongs to the FtsB family. As to quaternary structure, part of a complex composed of FtsB, FtsL and FtsQ.

Its subcellular location is the cell inner membrane. Essential cell division protein. May link together the upstream cell division proteins, which are predominantly cytoplasmic, with the downstream cell division proteins, which are predominantly periplasmic. This chain is Cell division protein FtsB, found in Pectobacterium atrosepticum (strain SCRI 1043 / ATCC BAA-672) (Erwinia carotovora subsp. atroseptica).